Here is a 466-residue protein sequence, read N- to C-terminus: MAEEQDLSEVELSPVGSEEPRCLSPSSAPSLGPDGGGGGSGLRASPGPGELGKVKKEQQDGEADDDKFPVCIREAVSQVLSGYDWTLVPMPVRVNGASKSKPHVKRPMNAFMVWAQAARRKLADQYPHLHNAELSKTLGKLWRLLNESDKRPFIEEAERLRMQHKKDHPDYKYQPRRRKNGKAAQGEAECPGGETDQGGAAAIQAHYKSAHLDHRHPEEGSPMSDGNPEHPSGQSHGPPTPPTTPKTELQSGKADPKRDGRSLGEGGKPHIDFGNVDIGEISHEVMSNMETFDVTELDQYLPPNGHPGHVGSYSAAGYGLSSALAVASGHSAWISKPPGVALPTVSPPAVDAKAQVKTETTGPQGPPHYTDQPSTSQIAYTSLSLPHYGSAFPSISRPQFDYSDHQPSGPYYGHAGQASGLYSAFSYMGPSQRPLYTAISDPSPSGPQSHSPTHWEQPVYTTLSRP.

Disordered stretches follow at residues 1-67 (MAEE…DDDK), 160-198 (LRMQHKKDHPDYKYQPRRRKNGKAAQGEAECPGGETDQG), 213-275 (DHRH…DFGN), 355-375 (QVKTETTGPQGPPHYTDQPST), and 433-466 (RPLYTAISDPSPSGPQSHSPTHWEQPVYTTLSRP). The span at 23–32 (LSPSSAPSLG) shows a compositional bias: low complexity. S24 is modified (phosphoserine). The interval 62–102 (EADDDKFPVCIREAVSQVLSGYDWTLVPMPVRVNGASKSKP) is dimerization (DIM). A DNA-binding region (HMG box) is located at residues 104 to 172 (VKRPMNAFMV…QHKKDHPDYK (69 aa)). 2 stretches are compositionally biased toward basic and acidic residues: residues 160–173 (LRMQHKKDHPDYKY) and 254–271 (ADPKRDGRSLGEGGKPHI). Residues 228–310 (PEHPSGQSHG…LPPNGHPGHV (83 aa)) form a transactivation domain (TAM) region. A transactivation domain (TAC) region spans residues 353–466 (KAQVKTETTG…QPVYTTLSRP (114 aa)). The segment covering 440-466 (SDPSPSGPQSHSPTHWEQPVYTTLSRP) has biased composition (polar residues).

Monomer. Interacts with Armcx3 at the mitochondrial outer membrane surface. Interacts with PAX3. Predominant expression in glial cells of the nervous system.

The protein resides in the cytoplasm. It localises to the nucleus. Its subcellular location is the mitochondrion outer membrane. In terms of biological role, transcription factor that plays a central role in developing and mature glia. Specifically activates expression of myelin genes, during oligodendrocyte (OL) maturation, such as DUSP15 and MYRF, thereby playing a central role in oligodendrocyte maturation and CNS myelination. Once induced, MYRF cooperates with SOX10 to implement the myelination program. Transcriptional activator of MITF, acting synergistically with PAX3. Transcriptional activator of MBP, via binding to the gene promoter. The polypeptide is Transcription factor SOX-10 (Sox10) (Rattus norvegicus (Rat)).